We begin with the raw amino-acid sequence, 653 residues long: Large subunit GTPase 1 homolog (653 aa).

A disordered region spans residues 1–31; that stretch reads MGRRRAPAGGSLGRALMRHQTQRSRSHRHTD. Residues 16–28 show a composition bias toward basic residues; it reads LMRHQTQRSRSHR. 2 positions are modified to phosphoserine: serine 93 and serine 97. A CP-type G domain is found at 164–445; sequence WRQLWRVIER…LCDCPGLVMP (282 aa). 212-215 lines the GTP pocket; it reads NKAD. The tract at residues 251 to 358 is disordered; it reads DSEEEANKDD…RKTPQKRQLH (108 aa). Residue serine 252 is modified to Phosphoserine. Residues 258–288 show a composition bias toward basic and acidic residues; it reads KDDRQSNTAEFEHSSFDEAEISHSETEHLPA. Positions 299–333 are enriched in acidic residues; the sequence is TTDEDDSEYEDCPEEEEDDWQTCSEEDGPEEEDCG. Residues 394–401 and 438–441 contribute to the GTP site; these read GYPNVGKS and DCPG. The segment at 630–653 is disordered; sequence SENGAGKPWKKHGNRNKKEKSCRL. The span at 637–647 shows a compositional bias: basic residues; it reads PWKKHGNRNKK.

It belongs to the TRAFAC class YlqF/YawG GTPase family. LSG1 subfamily.

It localises to the cytoplasm. The protein resides in the endoplasmic reticulum. The protein localises to the nucleus. Its subcellular location is the cajal body. It catalyses the reaction GTP + H2O = GDP + phosphate + H(+). Its function is as follows. Functions as a GTPase. May act by mediating the release of NMD3 from the 60S ribosomal subunit after export into the cytoplasm during the 60S ribosomal subunit maturation. The sequence is that of Large subunit GTPase 1 homolog from Macaca fascicularis (Crab-eating macaque).